Consider the following 345-residue polypeptide: L-threonine 3-dehydrogenase (345 aa).

A Zn(2+)-binding site is contributed by cysteine 39. Active-site charge relay system residues include threonine 41 and histidine 44. The Zn(2+) site is built by histidine 64, glutamate 65, cysteine 94, cysteine 97, cysteine 100, and cysteine 108. NAD(+) contacts are provided by residues isoleucine 176, aspartate 196, arginine 201, 263–265, and 287–288; these read LGI and VY.

This sequence belongs to the zinc-containing alcohol dehydrogenase family. Homotetramer. It depends on Zn(2+) as a cofactor.

Its subcellular location is the cytoplasm. The catalysed reaction is L-threonine + NAD(+) = (2S)-2-amino-3-oxobutanoate + NADH + H(+). It functions in the pathway amino-acid degradation; L-threonine degradation via oxydo-reductase pathway; glycine from L-threonine: step 1/2. In terms of biological role, catalyzes the NAD(+)-dependent oxidation of L-threonine to 2-amino-3-ketobutyrate. This is L-threonine 3-dehydrogenase from Anaeromyxobacter dehalogenans (strain 2CP-1 / ATCC BAA-258).